Here is a 345-residue protein sequence, read N- to C-terminus: Fe-S cluster assembly protein DRE2 (345 aa).

The segment at 11–166 (FSHSSNGVVL…SIGSSSGSSS (156 aa)) is N-terminal SAM-like domain. The tract at residues 147 to 166 (SKPATASSSFSIGSSSGSSS) is disordered. Low complexity predominate over residues 153–166 (SSSFSIGSSSGSSS). The interval 167–210 (ALPLRRKLGSGASANAKKSLWATQPASANDLIDEASLLRDADFV) is linker. Positions 220, 233, 236, and 238 each coordinate [2Fe-2S] cluster. Residues 220-238 (CDVGAGQGKKKKACKGCTC) are fe-S binding site A. [4Fe-4S] cluster-binding residues include cysteine 307, cysteine 310, cysteine 318, and cysteine 321. Short sequence motifs (cx2C motif) lie at residues 307–310 (CGSC) and 318–321 (CSSC). The segment at 307-321 (CGSCFLGDAFRCSSC) is fe-S binding site B.

This sequence belongs to the anamorsin family. As to quaternary structure, monomer. Interacts with TAH18. Interacts with MIA40. [2Fe-2S] cluster serves as cofactor. It depends on [4Fe-4S] cluster as a cofactor.

The protein localises to the cytoplasm. It is found in the mitochondrion intermembrane space. Component of the cytosolic iron-sulfur (Fe-S) protein assembly (CIA) machinery required for the maturation of extramitochondrial Fe-S proteins. Part of an electron transfer chain functioning in an early step of cytosolic Fe-S biogenesis, facilitating the de novo assembly of a [4Fe-4S] cluster on the scaffold complex CFD1-NBP35. Electrons are transferred to DRE2 from NADPH via the FAD- and FMN-containing protein TAH18. TAH18-DRE2 are also required for the assembly of the diferric tyrosyl radical cofactor of ribonucleotide reductase (RNR), probably by providing electrons for reduction during radical cofactor maturation in the catalytic small subunit RNR2. The chain is Fe-S cluster assembly protein DRE2 from Mycosarcoma maydis (Corn smut fungus).